Reading from the N-terminus, the 35-residue chain is Photosystem II reaction center protein T (35 aa).

A helical membrane pass occupies residues 3 to 23 (ALVYTFLLISTLGIIFFAIFF).

Belongs to the PsbT family. In terms of assembly, PSII is composed of 1 copy each of membrane proteins PsbA, PsbB, PsbC, PsbD, PsbE, PsbF, PsbH, PsbI, PsbJ, PsbK, PsbL, PsbM, PsbT, PsbY, PsbZ, Psb30/Ycf12, at least 3 peripheral proteins of the oxygen-evolving complex and a large number of cofactors. It forms dimeric complexes.

It localises to the plastid. The protein localises to the chloroplast thylakoid membrane. Found at the monomer-monomer interface of the photosystem II (PS II) dimer, plays a role in assembly and dimerization of PSII. PSII is a light-driven water plastoquinone oxidoreductase, using light energy to abstract electrons from H(2)O, generating a proton gradient subsequently used for ATP formation. The sequence is that of Photosystem II reaction center protein T from Aristolochia macrophylla (Dutchman's pipe vine).